A 156-amino-acid polypeptide reads, in one-letter code: 6,7-dimethyl-8-ribityllumazine synthase (156 aa).

Residues Phe24, 58–60 (AFE), and 82–84 (VII) contribute to the 5-amino-6-(D-ribitylamino)uracil site. 87-88 (ST) serves as a coordination point for (2S)-2-hydroxy-3-oxobutyl phosphate. The active-site Proton donor is His90. Phe115 contributes to the 5-amino-6-(D-ribitylamino)uracil binding site. Arg129 is a (2S)-2-hydroxy-3-oxobutyl phosphate binding site.

It belongs to the DMRL synthase family.

The catalysed reaction is (2S)-2-hydroxy-3-oxobutyl phosphate + 5-amino-6-(D-ribitylamino)uracil = 6,7-dimethyl-8-(1-D-ribityl)lumazine + phosphate + 2 H2O + H(+). The protein operates within cofactor biosynthesis; riboflavin biosynthesis; riboflavin from 2-hydroxy-3-oxobutyl phosphate and 5-amino-6-(D-ribitylamino)uracil: step 1/2. Its function is as follows. Catalyzes the formation of 6,7-dimethyl-8-ribityllumazine by condensation of 5-amino-6-(D-ribitylamino)uracil with 3,4-dihydroxy-2-butanone 4-phosphate. This is the penultimate step in the biosynthesis of riboflavin. This is 6,7-dimethyl-8-ribityllumazine synthase from Chlorobaculum parvum (strain DSM 263 / NCIMB 8327) (Chlorobium vibrioforme subsp. thiosulfatophilum).